The following is a 229-amino-acid chain: uncharacterized protein (229 aa).

This is an uncharacterized protein from Bacillus subtilis (strain 168).